The following is a 2833-amino-acid chain: Reticulocyte-binding protein 1 (2833 aa).

The first 22 residues, 1 to 22, serve as a signal peptide directing secretion; it reads MKRGICLAALLCLFNYLGAGHG. Residues 75-91 are compositionally biased toward basic and acidic residues; it reads ETDNASGKDAEGSRPSH. Disordered stretches follow at residues 75-95, 112-133, and 819-860; these read ETDNASGKDAEGSRPSHDSSF, HVKESTPHSTTRESTEKGKENE, and KHKQ…NFSR. The span at 819–836 shows a compositional bias: basic and acidic residues; the sequence is KHKQNRSEKEEEYFKNES. Residues 837–849 are compositionally biased toward acidic residues; that stretch reads VEEDLSREETEEQ. Residues 2563 to 2565 carry the Cell attachment site motif; that stretch reads RGD. The disordered stretch occupies residues 2619–2755; it reads EMNSKKSAIE…GTYQDTSNSS (137 aa). Basic and acidic residues-rich tracts occupy residues 2621 to 2633 and 2640 to 2652; these read NSKKSAIEKEKTA and ENNRREEEERARV. Over residues 2655-2670 the composition is skewed to polar residues; the sequence is MSMNNDPTQSETTHSE. Over residues 2706–2720 the composition is skewed to acidic residues; that stretch reads LEEEETTAPMEETEM. Residues 2731–2742 show a composition bias toward basic and acidic residues; that stretch reads TRSDEPDMHTEN. Positions 2743-2755 are enriched in polar residues; the sequence is TQDGTYQDTSNSS.

As to quaternary structure, homodimer.

It localises to the membrane. In terms of biological role, involved in reticulocyte adhesion. Specifically binds to human reticulocyte cells. The protein is Reticulocyte-binding protein 1 (RBP1) of Plasmodium vivax (strain Belem).